Consider the following 498-residue polypeptide: ATP synthase subunit beta, chloroplastic (498 aa).

172-179 (GGAGVGKT) is a binding site for ATP.

It belongs to the ATPase alpha/beta chains family. In terms of assembly, F-type ATPases have 2 components, CF(1) - the catalytic core - and CF(0) - the membrane proton channel. CF(1) has five subunits: alpha(3), beta(3), gamma(1), delta(1), epsilon(1). CF(0) has four main subunits: a(1), b(1), b'(1) and c(9-12).

Its subcellular location is the plastid. The protein localises to the chloroplast thylakoid membrane. The catalysed reaction is ATP + H2O + 4 H(+)(in) = ADP + phosphate + 5 H(+)(out). Its function is as follows. Produces ATP from ADP in the presence of a proton gradient across the membrane. The catalytic sites are hosted primarily by the beta subunits. In Saccharum hybrid (Sugarcane), this protein is ATP synthase subunit beta, chloroplastic.